A 736-amino-acid chain; its full sequence is DNA topoisomerase 1 (736 aa).

A Toprim domain is found at 2–113 (KHLIIVESPA…SYPRIVFHEI (112 aa)). The Mg(2+) site is built by glutamate 8 and aspartate 82. The 424-residue stretch at 129-552 (DMFKVNAQQA…DFYYPFMDKI (424 aa)) folds into the Topo IA-type catalytic domain. Residues 163-168 (SAGRVQ) are interaction with DNA. Tyrosine 297 functions as the O-(5'-phospho-DNA)-tyrosine intermediate in the catalytic mechanism. 4 consecutive C4-type zinc fingers follow at residues 572-598 (CPKC…YPKC), 616-642 (CEKC…YPEC), 663-689 (CPEC…YPKC), and 702-725 (CEKC…CIQC).

It belongs to the type IA topoisomerase family. In terms of assembly, monomer. Requires Mg(2+) as cofactor.

It carries out the reaction ATP-independent breakage of single-stranded DNA, followed by passage and rejoining.. In terms of biological role, releases the supercoiling and torsional tension of DNA, which is introduced during the DNA replication and transcription, by transiently cleaving and rejoining one strand of the DNA duplex. Introduces a single-strand break via transesterification at a target site in duplex DNA. The scissile phosphodiester is attacked by the catalytic tyrosine of the enzyme, resulting in the formation of a DNA-(5'-phosphotyrosyl)-enzyme intermediate and the expulsion of a 3'-OH DNA strand. The free DNA strand then undergoes passage around the unbroken strand, thus removing DNA supercoils. Finally, in the religation step, the DNA 3'-OH attacks the covalent intermediate to expel the active-site tyrosine and restore the DNA phosphodiester backbone. The chain is DNA topoisomerase 1 from Helicobacter pylori (strain J99 / ATCC 700824) (Campylobacter pylori J99).